Here is a 282-residue protein sequence, read N- to C-terminus: NAD-dependent protein deacetylase 1 (282 aa).

One can recognise a Deacetylase sirtuin-type domain in the interval methionine 1–histidine 282. Residues glycine 25 to serine 45 and glutamine 101 to aspartate 104 contribute to the NAD(+) site. Histidine 119 acts as the Proton acceptor in catalysis. Cysteine 127, cysteine 130, cysteine 181, and cysteine 184 together coordinate Zn(2+). Residues glycine 221–serine 223, asparagine 247–glycine 249, and cysteine 265 each bind NAD(+).

The protein belongs to the sirtuin family. Class II subfamily. It depends on Zn(2+) as a cofactor.

It is found in the cytoplasm. The catalysed reaction is N(6)-acetyl-L-lysyl-[protein] + NAD(+) + H2O = 2''-O-acetyl-ADP-D-ribose + nicotinamide + L-lysyl-[protein]. In terms of biological role, NAD-dependent protein deacetylase which modulates the activities of several enzymes which are inactive in their acetylated form. This chain is NAD-dependent protein deacetylase 1, found in Mycobacterium avium (strain 104).